The primary structure comprises 460 residues: UDP-N-acetylmuramate--L-alanine ligase (460 aa).

ATP is bound at residue G116–T122.

This sequence belongs to the MurCDEF family.

Its subcellular location is the cytoplasm. It catalyses the reaction UDP-N-acetyl-alpha-D-muramate + L-alanine + ATP = UDP-N-acetyl-alpha-D-muramoyl-L-alanine + ADP + phosphate + H(+). Its pathway is cell wall biogenesis; peptidoglycan biosynthesis. In terms of biological role, cell wall formation. The protein is UDP-N-acetylmuramate--L-alanine ligase of Caldanaerobacter subterraneus subsp. tengcongensis (strain DSM 15242 / JCM 11007 / NBRC 100824 / MB4) (Thermoanaerobacter tengcongensis).